Consider the following 185-residue polypeptide: dCTP deaminase (185 aa).

Residues 107-112, 131-133, Q152, Y166, and Q176 each bind dCTP; these read KSTYAR and TLE. The Proton donor/acceptor role is filled by E133.

This sequence belongs to the dCTP deaminase family. As to quaternary structure, homotrimer.

It catalyses the reaction dCTP + H2O + H(+) = dUTP + NH4(+). The protein operates within pyrimidine metabolism; dUMP biosynthesis; dUMP from dCTP (dUTP route): step 1/2. Its function is as follows. Catalyzes the deamination of dCTP to dUTP. In Wolbachia pipientis wMel, this protein is dCTP deaminase.